The primary structure comprises 211 residues: MANSGLQLLGFSMALLGWVGLVACTAIPQWQMSSYAGDNIITAQAMYKGLWMDCVTQSTGMMSCKMYDSVLALSAALQATRALMVVSLVLGFLAMFVATMGMKCTRCGGDDKVKKARIAMGGGIIFIVAGLAALVACSWYGHQIVTDFYNPLIPTNIKYEFGPAIFIGWAGSALVILGGALLSCSCPGNESKAGYRVPRSYPKSNSSKEYV.

Residues M1–Q7 are Cytoplasmic-facing. A helical transmembrane segment spans residues L8 to P28. Residues Q29 to R81 are Extracellular-facing. Residues A82–M102 form a helical membrane-spanning segment. Residues K103 to R117 lie on the Cytoplasmic side of the membrane. Residues I118–S138 form a helical membrane-spanning segment. At W139–E160 the chain is on the extracellular side. Residues F161–L181 traverse the membrane as a helical segment. Over L182–V211 the chain is Cytoplasmic. Positions Y210–V211 are interactions with TJP1, TJP2 and TJP3.

Belongs to the claudin family. As to quaternary structure, directly interacts with TJP1/ZO-1, TJP2/ZO-2 and TJP3/ZO-3. The phosphorylated form interacts with EPCAM. Does not interact with CD81. Phosphorylated. In terms of tissue distribution, expressed in kidney, lung and prostate. Isoform 1 seems to be predominant, except in some normal prostate samples, where isoform 2 is the major form. Down-regulated in breast cancers, including ductal carcinoma in situ (DCIS), lobular carcinoma in situ (LCIS) and invasive ductal carcinoma (IDC) (at protein level), as well as in several cancer cell lines. Loss of expression correlates with histological grade, occurring predominantly in high-grade lesions.

Its subcellular location is the cell membrane. It localises to the basolateral cell membrane. It is found in the cell junction. The protein localises to the tight junction. Its function is as follows. Plays a major role in tight junction-specific obliteration of the intercellular space. This chain is Claudin-7 (CLDN7), found in Homo sapiens (Human).